We begin with the raw amino-acid sequence, 434 residues long: Ribosomal protein uS12 methylthiotransferase RimO (434 aa).

Residues 9–125 (PAIFLLSLGC…VLAAIGAKYR (117 aa)) form the MTTase N-terminal domain. 6 residues coordinate [4Fe-4S] cluster: Cys-18, Cys-54, Cys-88, Cys-149, Cys-153, and Cys-156. The Radical SAM core domain maps to 135 to 364 (LTPPHYAFLK…MELQEGISAS (230 aa)). The TRAM domain maps to 367–434 (RKLEGQTLKV…AYELFGRISG (68 aa)).

Belongs to the methylthiotransferase family. RimO subfamily. [4Fe-4S] cluster serves as cofactor.

It localises to the cytoplasm. The enzyme catalyses L-aspartate(89)-[ribosomal protein uS12]-hydrogen + (sulfur carrier)-SH + AH2 + 2 S-adenosyl-L-methionine = 3-methylsulfanyl-L-aspartate(89)-[ribosomal protein uS12]-hydrogen + (sulfur carrier)-H + 5'-deoxyadenosine + L-methionine + A + S-adenosyl-L-homocysteine + 2 H(+). Catalyzes the methylthiolation of an aspartic acid residue of ribosomal protein uS12. The chain is Ribosomal protein uS12 methylthiotransferase RimO from Chlorobaculum tepidum (strain ATCC 49652 / DSM 12025 / NBRC 103806 / TLS) (Chlorobium tepidum).